The following is a 157-amino-acid chain: UPF0178 protein Nwi_2152 (157 aa).

This sequence belongs to the UPF0178 family.

This Nitrobacter winogradskyi (strain ATCC 25391 / DSM 10237 / CIP 104748 / NCIMB 11846 / Nb-255) protein is UPF0178 protein Nwi_2152.